Consider the following 311-residue polypeptide: tRNA N6-adenosine threonylcarbamoyltransferase (311 aa).

Fe cation contacts are provided by histidine 108 and histidine 112. Substrate contacts are provided by residues 130–134, aspartate 163, glycine 176, aspartate 180, and asparagine 270; that span reads LVSGG. Aspartate 294 contributes to the Fe cation binding site.

Belongs to the KAE1 / TsaD family. Requires Fe(2+) as cofactor.

Its subcellular location is the cytoplasm. The enzyme catalyses L-threonylcarbamoyladenylate + adenosine(37) in tRNA = N(6)-L-threonylcarbamoyladenosine(37) in tRNA + AMP + H(+). Required for the formation of a threonylcarbamoyl group on adenosine at position 37 (t(6)A37) in tRNAs that read codons beginning with adenine. Is involved in the transfer of the threonylcarbamoyl moiety of threonylcarbamoyl-AMP (TC-AMP) to the N6 group of A37, together with TsaE and TsaB. TsaD likely plays a direct catalytic role in this reaction. In Metamycoplasma arthritidis (strain 158L3-1) (Mycoplasma arthritidis), this protein is tRNA N6-adenosine threonylcarbamoyltransferase.